A 486-amino-acid chain; its full sequence is Dipeptide and tripeptide permease B (486 aa).

The Cytoplasmic portion of the chain corresponds to 1 to 27; that stretch reads MNKPVSIGLLQQPKPFFMIFFVELWER. A helical transmembrane segment spans residues 28–48; the sequence is FGYYGVQGVLTVYFVQKLGFS. Residues 49–52 are Periplasmic-facing; it reads QEQA. Residues 53–73 traverse the membrane as a helical segment; the sequence is FITFGAFAALVFGLISIGGYV. At 74–82 the chain is on the cytoplasmic side; that stretch reads GDHLLGTKR. The chain crosses the membrane as a helical span at residues 83-103; sequence TIVLGAIVLAIGYFMTGLSIL. Residues 104-106 are Periplasmic-facing; the sequence is HPN. Residues 107-127 form a helical membrane-spanning segment; the sequence is LIFYALGTIAVGNGLFKANPA. Residues 128–146 are Cytoplasmic-facing; the sequence is SLLSKCYPPKDPRLDGAFT. A helical transmembrane segment spans residues 147–167; it reads LFYMSINLGSLFSLALAPVIA. The Periplasmic portion of the chain corresponds to 168 to 172; the sequence is EKFSY. Residues 173 to 193 form a helical membrane-spanning segment; it reads AVTYNICGIGLIIALLVYIFC. Residues 194-211 are Cytoplasmic-facing; it reads RNTVRNIGSEPDHQRINY. A helical membrane pass occupies residues 212–232; sequence TNLFLVVAGSVVMVYVCAWLM. A topological domain (periplasmic) is located at residue His-233. A helical membrane pass occupies residues 234 to 254; sequence NVKIANIMLITLSVIVVFIFF. Topologically, residues 255–267 are cytoplasmic; that stretch reads REALKQDKIGRNK. A helical membrane pass occupies residues 268 to 288; the sequence is MFVAFILMLQAIVFFILYAQM. Residues 289–311 are Periplasmic-facing; sequence PTSLNFFAIHNVHHQLLGFNINP. Residues 312–332 form a helical membrane-spanning segment; that stretch reads VSFQALNPFWIVVASPILAVL. Over 333-348 the chain is Cytoplasmic; that stretch reads YTHWGAKGKDLTMPAK. The helical transmembrane segment at 349–369 threads the bilayer; sequence FAVGMFLCSLGFLTAAAAGLW. Over 370–375 the chain is Periplasmic; the sequence is FADEQG. A helical transmembrane segment spans residues 376–396; the sequence is LTSAWFIVLVYLFQGVGELMI. Residues 397-419 lie on the Cytoplasmic side of the membrane; the sequence is SALGLAMIAALVPQYLMGFILGM. A helical transmembrane segment spans residues 420–440; that stretch reads WYLTQATSSLLGGYVAALTAA. Over 441 to 456 the chain is Periplasmic; it reads PKGITDPLQTLPVYTS. Residues 457–477 form a helical membrane-spanning segment; the sequence is VFGKIGIATFIVAIIMAATVP. Residues 478–486 are Cytoplasmic-facing; it reads LLNRMMQEK.

This sequence belongs to the major facilitator superfamily. Proton-dependent oligopeptide transporter (POT/PTR) (TC 2.A.17) family. DtpB subfamily.

It is found in the cell inner membrane. Functionally, proton-dependent permease that transports di- and tripeptides. This chain is Dipeptide and tripeptide permease B, found in Photorhabdus luminescens (Xenorhabdus luminescens).